A 486-amino-acid polypeptide reads, in one-letter code: Ribosomal RNA small subunit methyltransferase F (486 aa).

S-adenosyl-L-methionine is bound by residues 124 to 130, Glu148, Asp175, and Asp193; that span reads ASAPGSK. Cys246 (nucleophile) is an active-site residue.

This sequence belongs to the class I-like SAM-binding methyltransferase superfamily. RsmB/NOP family.

It is found in the cytoplasm. It catalyses the reaction cytidine(1407) in 16S rRNA + S-adenosyl-L-methionine = 5-methylcytidine(1407) in 16S rRNA + S-adenosyl-L-homocysteine + H(+). In terms of biological role, specifically methylates the cytosine at position 1407 (m5C1407) of 16S rRNA. The chain is Ribosomal RNA small subunit methyltransferase F from Shewanella putrefaciens (strain CN-32 / ATCC BAA-453).